The chain runs to 488 residues: UDP-N-acetylmuramate--L-alanine ligase (488 aa).

Gly122–Thr128 lines the ATP pocket.

Belongs to the MurCDEF family.

It localises to the cytoplasm. It carries out the reaction UDP-N-acetyl-alpha-D-muramate + L-alanine + ATP = UDP-N-acetyl-alpha-D-muramoyl-L-alanine + ADP + phosphate + H(+). It functions in the pathway cell wall biogenesis; peptidoglycan biosynthesis. In terms of biological role, cell wall formation. The sequence is that of UDP-N-acetylmuramate--L-alanine ligase from Mycobacterium marinum (strain ATCC BAA-535 / M).